A 544-amino-acid polypeptide reads, in one-letter code: Membrane protein insertase YidC (544 aa).

A helical membrane pass occupies residues 6-26 (NLLLIALLFVTFMLWQAWETD). The tract at residues 112–132 (SGLTGKNGPDNPANGPRPLFT) is disordered. 4 helical membrane-spanning segments follow: residues 343–363 (KFLH…TFIV), 418–438 (LGGC…YYML), 456–476 (LSAQ…MFFI), and 497–517 (PVIF…YYIV).

This sequence belongs to the OXA1/ALB3/YidC family. Type 1 subfamily. As to quaternary structure, interacts with the Sec translocase complex via SecD. Specifically interacts with transmembrane segments of nascent integral membrane proteins during membrane integration.

The protein localises to the cell inner membrane. In terms of biological role, required for the insertion and/or proper folding and/or complex formation of integral membrane proteins into the membrane. Involved in integration of membrane proteins that insert both dependently and independently of the Sec translocase complex, as well as at least some lipoproteins. Aids folding of multispanning membrane proteins. This is Membrane protein insertase YidC from Pectobacterium carotovorum subsp. carotovorum (strain PC1).